A 260-amino-acid chain; its full sequence is CD40 ligand (260 aa).

Residues 1–22 (MIETYSQTAPRSVATGPPVSMK) are Cytoplasmic-facing. Residues 23-46 (IFMYLLTVFLITQMIGSALFAVYL) traverse the membrane as a helical; Signal-anchor for type II membrane protein segment. Over 47-260 (HRRLDKIEDE…GFTSFGLLKL (214 aa)) the chain is Extracellular. The THD domain maps to 121 to 260 (IAAHVISEAS…GFTSFGLLKL (140 aa)). A disulfide bond links Cys-177 and Cys-217. Residue Asn-239 is glycosylated (N-linked (GlcNAc...) asparagine).

This sequence belongs to the tumor necrosis factor family. As to quaternary structure, homotrimer. Interacts with CD28. CD40 ligand, soluble form: Exists as either a monomer or a homotrimer. Forms a ternary complex between CD40 and integrins for CD40-CD40LG signaling. In terms of processing, the soluble form derives from the membrane form by proteolytic processing.

It is found in the cell membrane. Its subcellular location is the cell surface. It localises to the secreted. Cytokine that acts as a ligand to CD40/TNFRSF5. Costimulates T-cell proliferation and cytokine production. Its cross-linking on T-cells generates a costimulatory signal which enhances the production of IL4 and IL10 in conjunction with the TCR/CD3 ligation and CD28 costimulation. Induces the activation of NF-kappa-B. Induces the activation of kinases MAPK8 and PAK2 in T-cells. Mediates B-cell proliferation in the absence of co-stimulus as well as IgE production in the presence of IL4. Involved in immunoglobulin class switching. In terms of biological role, acts as a ligand for integrins, specifically ITGA5:ITGB1 and ITGAV:ITGB3; both integrins and the CD40 receptor are required for activation of CD40-CD40LG signaling, which have cell-type dependent effects, such as B-cell activation, NF-kappa-B signaling and anti-apoptotic signaling. The polypeptide is CD40 ligand (CD40LG) (Canis lupus familiaris (Dog)).